Consider the following 1303-residue polypeptide: Endoplasmic reticulum transmembrane helix translocase spfA (1303 aa).

Transmembrane regions (helical) follow at residues 25–45 (LHAY…VYLS) and 57–77 (EWTF…WLMT). Residues 158–191 (KPPVKVFQQAQGLTSKEEIDRIQHHYGDNTFDIP) are A-domain; part 1. The next 2 membrane-spanning stretches (helical) occupy residues 201–221 (EHAV…WMLD) and 223–243 (YWYY…TVVW). An A-domain; part 2 region spans residues 256 to 408 (NIKPYDVWVY…LVRTMIYSTE (153 aa)). N-linked (GlcNAc...) asparagine glycosylation occurs at asparagine 287. A helical transmembrane segment spans residues 415–435 (VEALLFILFLLIFAIAAAWYV). Asparagine 474 is a glycosylation site (N-linked (GlcNAc...) asparagine). Residues 484-513 (AIFCTEPFRIPFAGRVDVACFDKTGTLTGE) are P-domain; part 1. Aspartate 505 acts as the 4-aspartylphosphate intermediate in catalysis. Mg(2+) contacts are provided by aspartate 505 and threonine 507. 505-507 (DKT) serves as a coordination point for ATP. The interval 515–721 (LVVDGIAGLT…FAGFLVLQCP (207 aa)) is N-domain. Asparagine 589 carries N-linked (GlcNAc...) asparagine glycosylation. Positions 616 and 678 each coordinate ATP. Positions 724-883 (EDAIKAVRML…HVGVALLNGS (160 aa)) are P-domain; part 2. Asparagine 734 carries N-linked (GlcNAc...) asparagine glycosylation. Residues aspartate 746 and 862–866 (DGTND) each bind ATP. Aspartate 862 lines the Mg(2+) pocket. The segment at 884-1019 (PEDLAKIAEH…ELDDSEPPTI (136 aa)) is arm-like. Asparagine 958 is a glycosylation site (N-linked (GlcNAc...) asparagine). The segment at 1020–1035 (KLGDASVAAPFTSKLA) is P-domain; part 3. The next 5 membrane-spanning stretches (helical) occupy residues 1060–1080 (ILAL…LDGI), 1082–1102 (FGDG…LSIS), 1122–1142 (VYII…LIYL), 1201–1221 (AMYW…TEFI), and 1239–1259 (VTLT…ENVL). The disordered stretch occupies residues 1277–1303 (DQLQREMERKKQEELETQAEKERQRKV).

This sequence belongs to the cation transport ATPase (P-type) (TC 3.A.3) family. Type V subfamily. Mg(2+) is required as a cofactor.

Its subcellular location is the endoplasmic reticulum membrane. The enzyme catalyses [protein]-with a C-terminal TM segment(out) + ATP + H2O = [protein]-with a C-terminal TM segment(in) + ADP + phosphate + H(+). The ATPase activity is stimulated by phosphatidylinositol 4-phosphate (PI4P). Endoplasmic reticulum (ER) translocase required to remove mitochondrial transmembrane proteins mistargeted to the endoplasmic reticulum. Acts as a dislocase that mediates the ATP-dependent extraction of mislocalized mitochondrial transmembrane proteins from the endoplasmic reticulum membrane. Works in concert with the ER Ca(2+) pump srcA to support ER homeostasis. With srcA, also supports redox homeostasis and virulence. The chain is Endoplasmic reticulum transmembrane helix translocase spfA from Aspergillus fumigatus (strain ATCC MYA-4609 / CBS 101355 / FGSC A1100 / Af293) (Neosartorya fumigata).